A 178-amino-acid polypeptide reads, in one-letter code: Platelet inhibitor triplatin-2 (178 aa).

The signal sequence occupies residues 1 to 18 (MKMIISLTFLGILMLAFA). Disulfide bonds link Cys-25/Cys-134, Cys-60/Cys-178, and Cys-90/Cys-106.

It belongs to the calycin superfamily. Triabin family. Expressed in salivary glands.

It is found in the secreted. Inhibits platelet aggregation and vasoconstriction through binding to distinct eicosanoids involved in inflammation (acts as a scavenger), and has a role in inhibiting host innate immunity by impairing platelet-assisted formation of neutrophil extracellular traps (NETs). Inhibits platelet aggregation by collagen, and low doses of thromboxane A2 mimetic (TXA2 mimetic), and arachidonic acid (AA) without affecting aggregation induced by ADP, convulxin (GP6 agonist), and PMA. Binds to TXA2, TXB2, prostaglandine H2 mimetic (PGH2 mimetic), PGJ2, and PGF2alpha. Binding is not observed to leukotrienes, AA, and biogenic amines (PGE1, 5(S)-HETE, 12(S)-HETE, 20-HETE, norepinephrine, epinephrine, serotonin, LTC4 and ADP). Induces relaxation of aorta rat previously contracted with TXA2 mimetic. Moreover, it also impairs platelet-assisted formation of neutrophil extracellular traps (NETs). NETs are web-like structures of DNA and proteins that play an important role in killing of pathogens. In addition, NETs are implicated in thrombus formation. In vivo, this protein exhibits antithrombotic activity in two distinct mice models that are highly dependent on platelets. It is noteworthy that it inhibits thrombosis without promoting excessive bleeding. The polypeptide is Platelet inhibitor triplatin-2 (Triatoma infestans (Assassin bug)).